The sequence spans 350 residues: Hydroxymethylglutaryl-CoA synthase (350 aa).

The active-site Proton donor/acceptor is the Glu-83. Cys-115 (acyl-thioester intermediate) is an active-site residue. 2 residues coordinate (3S)-3-hydroxy-3-methylglutaryl-CoA: Cys-115 and Thr-156. Arg-204 is a binding site for CoA. 2 residues coordinate (3S)-3-hydroxy-3-methylglutaryl-CoA: Thr-206 and His-239. His-239 (proton donor/acceptor) is an active-site residue. Lys-244 is a CoA binding site. Asn-271 and Ser-301 together coordinate (3S)-3-hydroxy-3-methylglutaryl-CoA.

It belongs to the thiolase-like superfamily. Archaeal HMG-CoA synthase family. As to quaternary structure, interacts with acetoacetyl-CoA thiolase that catalyzes the precedent step in the pathway and with a DUF35 protein. The acetoacetyl-CoA thiolase/HMG-CoA synthase complex channels the intermediate via a fused CoA-binding site, which allows for efficient coupling of the endergonic thiolase reaction with the exergonic HMGCS reaction.

It carries out the reaction acetoacetyl-CoA + acetyl-CoA + H2O = (3S)-3-hydroxy-3-methylglutaryl-CoA + CoA + H(+). Its pathway is metabolic intermediate biosynthesis; (R)-mevalonate biosynthesis; (R)-mevalonate from acetyl-CoA: step 2/3. In terms of biological role, catalyzes the condensation of acetyl-CoA with acetoacetyl-CoA to form 3-hydroxy-3-methylglutaryl-CoA (HMG-CoA). Functions in the mevalonate (MVA) pathway leading to isopentenyl diphosphate (IPP), a key precursor for the biosynthesis of isoprenoid compounds that are building blocks of archaeal membrane lipids. This is Hydroxymethylglutaryl-CoA synthase from Thermococcus sibiricus (strain DSM 12597 / MM 739).